We begin with the raw amino-acid sequence, 193 residues long: Sarcoplasmic calcium-binding protein (193 aa).

3 EF-hand domains span residues Met-16–Ile-40, Ile-57–Gly-92, and Cys-101–Phe-136. Ca(2+) contacts are provided by Asp-18, Asp-20, Asn-22, Tyr-24, Asp-29, Asp-70, Asn-72, Asp-74, Gln-76, Glu-81, Asp-114, Asn-116, Asp-118, and Glu-125.

In terms of assembly, monomer and dimer. In terms of tissue distribution, skeletal muscle (at protein level).

In terms of biological role, like parvalbumins, SCPs seem to be more abundant in fast contracting muscles, but no functional relationship can be established from this distribution. This is Sarcoplasmic calcium-binding protein from Scylla paramamosain (Mud crab).